The primary structure comprises 428 residues: Enolase (428 aa).

(2R)-2-phosphoglycerate is bound at residue glutamine 163. The active-site Proton donor is glutamate 205. Residues aspartate 242, glutamate 286, and aspartate 313 each coordinate Mg(2+). 4 residues coordinate (2R)-2-phosphoglycerate: lysine 338, arginine 367, serine 368, and lysine 389. The active-site Proton acceptor is the lysine 338.

It belongs to the enolase family. Mg(2+) serves as cofactor.

The protein resides in the cytoplasm. It localises to the secreted. The protein localises to the cell surface. It catalyses the reaction (2R)-2-phosphoglycerate = phosphoenolpyruvate + H2O. The protein operates within carbohydrate degradation; glycolysis; pyruvate from D-glyceraldehyde 3-phosphate: step 4/5. Catalyzes the reversible conversion of 2-phosphoglycerate (2-PG) into phosphoenolpyruvate (PEP). It is essential for the degradation of carbohydrates via glycolysis. The protein is Enolase of Lactobacillus acidophilus (strain ATCC 700396 / NCK56 / N2 / NCFM).